The sequence spans 257 residues: Zinc transporter ZupT (257 aa).

Transmembrane regions (helical) follow at residues 5–25 (LILTILAGAATFIGAFLGVLG), 32–52 (LLAFSLGFAAGIMLLISLMEM), 61–81 (GMSPVLGYGMFIFGLLGYLGL), 109–129 (AILLTLGISLHNFPEGIATFV), 137–157 (LGFGIALAVALHNIPEGLAVV), 171–191 (ILWAGISGLAEILGGVLAWLI), 195–215 (MISPVVMAAIMAAVAGIMVAL), and 236–256 (GVLCGMSVMGFSLVLLQTAGI). Fe(2+) contacts are provided by N120 and E123. Zn(2+)-binding residues include E123 and H148. Fe(2+) is bound by residues N149, E152, and E181. E152 is a binding site for Zn(2+).

It belongs to the ZIP transporter (TC 2.A.5) family. ZupT subfamily.

Its subcellular location is the cell inner membrane. It catalyses the reaction Zn(2+)(in) = Zn(2+)(out). Functionally, mediates zinc uptake. May also transport other divalent cations. The sequence is that of Zinc transporter ZupT from Shigella dysenteriae serotype 1 (strain Sd197).